Reading from the N-terminus, the 312-residue chain is tRNA dimethylallyltransferase (312 aa).

13 to 20 provides a ligand contact to ATP; the sequence is GPTAAGKT. Position 15–20 (15–20) interacts with substrate; the sequence is TAAGKT. Interaction with substrate tRNA stretches follow at residues 38 to 41, 162 to 166, and 244 to 249; these read DSAM, QRLLR, and RCVGYR.

The protein belongs to the IPP transferase family. Monomer. Mg(2+) is required as a cofactor.

The enzyme catalyses adenosine(37) in tRNA + dimethylallyl diphosphate = N(6)-dimethylallyladenosine(37) in tRNA + diphosphate. In terms of biological role, catalyzes the transfer of a dimethylallyl group onto the adenine at position 37 in tRNAs that read codons beginning with uridine, leading to the formation of N6-(dimethylallyl)adenosine (i(6)A). This is tRNA dimethylallyltransferase from Chromohalobacter salexigens (strain ATCC BAA-138 / DSM 3043 / CIP 106854 / NCIMB 13768 / 1H11).